A 210-amino-acid polypeptide reads, in one-letter code: Prolactin-2 (210 aa).

The signal sequence occupies residues 1-23 (MARRSQGTKLHLAVLCLVVSCHA). 2 disulfides stabilise this stretch: Cys69–Cys183 and Cys200–Cys210.

Belongs to the somatotropin/prolactin family.

The protein localises to the secreted. The sequence is that of Prolactin-2 (prl2) from Oncorhynchus keta (Chum salmon).